The sequence spans 148 residues: Ribosome maturation factor RimP (148 aa).

This sequence belongs to the RimP family.

It is found in the cytoplasm. Its function is as follows. Required for maturation of 30S ribosomal subunits. In Nautilia profundicola (strain ATCC BAA-1463 / DSM 18972 / AmH), this protein is Ribosome maturation factor RimP.